The following is a 444-amino-acid chain: Abhydrolase domain-containing protein abhd-5.2 (444 aa).

Residues 162 to 409 (PIVLIHGFGA…SAGHHVYADD (248 aa)) enclose the AB hydrolase-1 domain.

The protein belongs to the peptidase S33 family. ABHD4/ABHD5 subfamily. Interacts with atgl-1; the interaction tethers atgl-1 to lipid droplets. In terms of tissue distribution, expressed in the hypodermis and intestine.

Its subcellular location is the lipid droplet. Its function is as follows. Acts coordinately with phospholipase atgl-1 within the lipolytic cascade to distribute stored energy to tissues to maintain energy levels during the dauer phase. Localizes atgl-1 to lipid droplets, possibly to facilitate triglyceride hydrolysis. Regulates lipid droplet size, lipid content, the exchange of lipids between lipid droplets and fusion of lipid droplets during the dauer phase. The sequence is that of Abhydrolase domain-containing protein abhd-5.2 from Caenorhabditis elegans.